The chain runs to 113 residues: DNA-directed RNA polymerase subunit Rpo4 (113 aa).

The protein belongs to the eukaryotic RPB4 RNA polymerase subunit family. As to quaternary structure, part of the 13-subunit RNA polymerase complex. Forms a stalk with Rpo7 that extends from the main structure.

Its subcellular location is the cytoplasm. The enzyme catalyses RNA(n) + a ribonucleoside 5'-triphosphate = RNA(n+1) + diphosphate. Its function is as follows. DNA-dependent RNA polymerase (RNAP) catalyzes the transcription of DNA into RNA using the four ribonucleoside triphosphates as substrates. This subunit is less well bound than the others. The polypeptide is DNA-directed RNA polymerase subunit Rpo4 (Saccharolobus solfataricus (strain ATCC 35092 / DSM 1617 / JCM 11322 / P2) (Sulfolobus solfataricus)).